The chain runs to 305 residues: UDP-3-O-acyl-N-acetylglucosamine deacetylase (305 aa).

Zn(2+)-binding residues include His-79, His-238, and Asp-242. His-265 serves as the catalytic Proton donor.

This sequence belongs to the LpxC family. The cofactor is Zn(2+).

The catalysed reaction is a UDP-3-O-[(3R)-3-hydroxyacyl]-N-acetyl-alpha-D-glucosamine + H2O = a UDP-3-O-[(3R)-3-hydroxyacyl]-alpha-D-glucosamine + acetate. Its pathway is glycolipid biosynthesis; lipid IV(A) biosynthesis; lipid IV(A) from (3R)-3-hydroxytetradecanoyl-[acyl-carrier-protein] and UDP-N-acetyl-alpha-D-glucosamine: step 2/6. In terms of biological role, catalyzes the hydrolysis of UDP-3-O-myristoyl-N-acetylglucosamine to form UDP-3-O-myristoylglucosamine and acetate, the committed step in lipid A biosynthesis. The sequence is that of UDP-3-O-acyl-N-acetylglucosamine deacetylase from Shigella boydii serotype 18 (strain CDC 3083-94 / BS512).